The chain runs to 246 residues: 5'-nucleotidase SurE (246 aa).

D8, D9, S39, and N91 together coordinate a divalent metal cation.

It belongs to the SurE nucleotidase family. Requires a divalent metal cation as cofactor.

Its subcellular location is the cytoplasm. It catalyses the reaction a ribonucleoside 5'-phosphate + H2O = a ribonucleoside + phosphate. Functionally, nucleotidase that shows phosphatase activity on nucleoside 5'-monophosphates. The protein is 5'-nucleotidase SurE of Actinobacillus succinogenes (strain ATCC 55618 / DSM 22257 / CCUG 43843 / 130Z).